The following is a 375-amino-acid chain: Probable neutral protease 2 homolog ARB_05817 (375 aa).

The first 19 residues, 1–19, serve as a signal peptide directing secretion; it reads MQVIVALAALGSLAAPALG. Positions 20–189 are excised as a propeptide; the sequence is FSIPRGVPVS…RGPLTRINKR (170 aa). Disulfide bonds link C197-C267 and C274-C292. Position 317 (H317) interacts with Zn(2+). The active site involves E318. Residues H321 and D332 each contribute to the Zn(2+) site.

The protein belongs to the peptidase M35 family. It depends on Zn(2+) as a cofactor.

The protein localises to the secreted. The catalysed reaction is Preferential cleavage of bonds with hydrophobic residues in P1'. Also 3-Asn-|-Gln-4 and 8-Gly-|-Ser-9 bonds in insulin B chain.. In terms of biological role, probable secreted metalloprotease that shows high activities on basic nuclear substrates such as histone and protamine. May be involved in virulence. The sequence is that of Probable neutral protease 2 homolog ARB_05817 from Arthroderma benhamiae (strain ATCC MYA-4681 / CBS 112371) (Trichophyton mentagrophytes).